The sequence spans 689 residues: Ataxin-1-like (689 aa).

A compositionally biased stretch (basic and acidic residues) spans 1 to 19 (MKPVHERSQECLPPKKRDL). Disordered stretches follow at residues 1–46 (MKPV…SEWS), 185–223 (ATPPPQAPSPAHSFNKAPSATSPSGQLPHHSSTQPLDLA), and 242–297 (LHET…GEGQ). The interval 20–197 (PVTSEDMGRT…PPQAPSPAHS (178 aa)) is interaction with NCOR2 and ATXN1. Residues 20-197 (PVTSEDMGRT…PPQAPSPAHS (178 aa)) are self-association. Polar residues-rich tracts occupy residues 28 to 43 (RTTSCSTNHTPSSDAS) and 200 to 219 (KAPSATSPSGQLPHHSSTQP). Over residues 257–268 (QESQSALEAAAA) the composition is skewed to low complexity. Residues 273–285 (RPRERNLVRRESE) are compositionally biased toward basic and acidic residues. At Ser-284 the chain carries Phosphoserine. The residue at position 330 (Thr-330) is a Phosphothreonine. Residues 357-405 (KEEPSPLNLSHHTPDHQGEGRGSARNPAELAEKSQARGFYPQSHQEPVK) are disordered. A Phosphoserine modification is found at Ser-361. Positions 457–588 (PPPITSSHLP…SISLQSLNSN (132 aa)) constitute an AXH domain. Ser-615 is subject to Phosphoserine. Residues 617-647 (ELCDSEGKSQPAGEGSRVVEPSQPESGAQAC) are disordered.

This sequence belongs to the ATXN1 family. In terms of assembly, homodimer. Interacts with CIC. Interacts (via AXH domain) with NCOR2. Interacts with ATXN1. Directly interacts with RBPJ; this interaction is disrupted in the presence of Notch intracellular domain. Competes with ATXN1 for RBPJ-binding. Found in a complex with CIC and ATXN1. As to expression, expressed in cerebellum and cerebral cortex.

The protein localises to the nucleus. The protein resides in the cell projection. It localises to the dendrite. In terms of biological role, chromatin-binding factor that repress Notch signaling in the absence of Notch intracellular domain by acting as a CBF1 corepressor. Binds to the HEY promoter and might assist, along with NCOR2, RBPJ-mediated repression. Can suppress ATXN1 cytotoxicity in spinocerebellar ataxia type 1 (SCA1). In concert with CIC and ATXN1, involved in brain development. The chain is Ataxin-1-like (ATXN1L) from Homo sapiens (Human).